A 100-amino-acid polypeptide reads, in one-letter code: Large ribosomal subunit protein uL23 (100 aa).

It belongs to the universal ribosomal protein uL23 family. As to quaternary structure, part of the 50S ribosomal subunit. Contacts protein L29, and trigger factor when it is bound to the ribosome.

Its function is as follows. One of the early assembly proteins it binds 23S rRNA. One of the proteins that surrounds the polypeptide exit tunnel on the outside of the ribosome. Forms the main docking site for trigger factor binding to the ribosome. This chain is Large ribosomal subunit protein uL23, found in Novosphingobium aromaticivorans (strain ATCC 700278 / DSM 12444 / CCUG 56034 / CIP 105152 / NBRC 16084 / F199).